The primary structure comprises 154 residues: Deoxyuridine 5'-triphosphate nucleotidohydrolase (154 aa).

Substrate contacts are provided by residues 72–74 (RSG), Asn85, 89–91 (LID), and Met99.

The protein belongs to the dUTPase family. It depends on Mg(2+) as a cofactor.

It catalyses the reaction dUTP + H2O = dUMP + diphosphate + H(+). Its pathway is pyrimidine metabolism; dUMP biosynthesis; dUMP from dCTP (dUTP route): step 2/2. In terms of biological role, this enzyme is involved in nucleotide metabolism: it produces dUMP, the immediate precursor of thymidine nucleotides and it decreases the intracellular concentration of dUTP so that uracil cannot be incorporated into DNA. The sequence is that of Deoxyuridine 5'-triphosphate nucleotidohydrolase from Psychrobacter sp. (strain PRwf-1).